Here is a 75-residue protein sequence, read N- to C-terminus: 8.9 kDa basic protein (75 aa).

This chain is 8.9 kDa basic protein (P8.9), found in Orgyia pseudotsugata (Douglas-fir tussock moth).